The following is a 372-amino-acid chain: Proton-coupled zinc antiporter SLC30A2 (372 aa).

The Cytoplasmic segment spans residues 1-140 (MEAKEKQHLL…TMNFGWQRAE (140 aa)). A Mitochondrial localization signal motif is present at residues 51–54 (HHCH). Zn(2+)-binding residues include Cys53, His106, and Asp110. The chain crosses the membrane as a helical span at residues 141 to 161 (ILGALVSVLSIWVVTGVLVYL). Residues 162-175 (AVERLISGDYEIDG) are Lumenal-facing. The helical transmembrane segment at 176–196 (GTMLITSGCAVAVNIIMGLTL) threads the bilayer. Residues 197–220 (HQSGHGHSHGTTNQQEENPSVRAA) lie on the Cytoplasmic side of the membrane. A helical membrane pass occupies residues 221–241 (FIHVIGDFMQSMGVLVAAYIL). His223 and Asp227 together coordinate Zn(2+). Topologically, residues 242 to 249 (YFKPEYKY) are lumenal. Residues 250 to 270 (VDPICTFVFSILVLGTTLTIL) form a helical membrane-spanning segment. At 271–304 (RDVILVLMEGTPKGVDFTAVRDLLLSVEGVEALH) the chain is on the cytoplasmic side. The Lysosomal targeting motif motif lies at 294–295 (LL). Ser296 is modified (phosphoserine). Zn(2+) is bound by residues His304, His321, and Glu355. Residues 305–325 (SLHIWALTVAQPVLSVHIAIA) traverse the membrane as a helical segment. At 326 to 372 (QNTDAQAVLKTASSRLQGKFHFHTVTIQIEDYSEDMKDCQACQGPSD) the chain is on the lumenal side.

Belongs to the cation diffusion facilitator (CDF) transporter (TC 2.A.4) family. SLC30A subfamily. Homodimer. Interacts (via lysosomal targeting motif) with AP3D1; in AP-3-mediated transport to lysosomes. Interacts with TMEM163. In terms of processing, phosphorylated at Ser-296. Phosphorylation at Ser-296 prevents localization to lysosomes. Dephosphorylation of Ser-296 which triggers localization to lysosomes, accumulation of zinc into lysosomes and lysosomal-mediated cell death is induced by TNF-alpha.

The protein resides in the cytoplasmic vesicle. The protein localises to the secretory vesicle membrane. Its subcellular location is the zymogen granule membrane. It is found in the endosome membrane. It localises to the lysosome membrane. The protein resides in the mitochondrion inner membrane. The protein localises to the cell membrane. The catalysed reaction is Zn(2+)(in) + 2 H(+)(out) = Zn(2+)(out) + 2 H(+)(in). Functionally, electroneutral proton-coupled antiporter concentrating zinc ions into a variety of intracellular organelles including endosomes, zymogen granules and mitochondria. Thereby, plays a crucial role in cellular zinc homeostasis to confer upon cells protection against its potential cytotoxicity. Regulates the zinc concentration of milk, through the transport of zinc ions into secretory vesicles of mammary cells. By concentrating zinc ions into lysosomes participates to lysosomal-mediated cell death during early mammary gland involution. In terms of biological role, electroneutral proton-coupled antiporter mediating the efflux of zinc ions through the plasma membrane. The polypeptide is Proton-coupled zinc antiporter SLC30A2 (Homo sapiens (Human)).